Reading from the N-terminus, the 194-residue chain is Probable GTP-binding protein EngB (194 aa).

Positions 22–194 (DLPEYALAGR…AWQFIKEGME (173 aa)) constitute an EngB-type G domain. Residues 30–37 (GRSNVGKS), 57–61 (GKTQT), 75–78 (DVPG), 142–145 (TKAD), and 174–176 (FSS) each bind GTP. The Mg(2+) site is built by S37 and T59.

Belongs to the TRAFAC class TrmE-Era-EngA-EngB-Septin-like GTPase superfamily. EngB GTPase family. Mg(2+) is required as a cofactor.

Functionally, necessary for normal cell division and for the maintenance of normal septation. In Listeria innocua serovar 6a (strain ATCC BAA-680 / CLIP 11262), this protein is Probable GTP-binding protein EngB.